The primary structure comprises 1296 residues: MLILRGAPALSEFRVNKILARCQQSQLPVTNVYAEYAHFADLTSPLSSAEQTKLEKLLTYGPTIAEHTPAGKLVLVTPRPGTISPWASKATDIAHNCGLKQVHRVERGIAYYVEGELNAEQLLQVTALLHDRMTEATHSQFEDAAQLFRSDAPRQMSSVDILSGGREALAIANVEQGFALADDEIDYLVENFIKLGRNPNDIELFMFAQANSEHCRHKIFNADWTIDGEEQPKSLFKMIKNTFEKNPENVLSAYKDNAAVMKGSKAGRFFPNTQGEYAYHQEDIEILMKVETHNHPTAIAPFSGAATGSGGEIRDEGATGRGSKPKAGLVGFTVSNLRIPGYEQPWESDFGKPGRIVTALDIMTEGPLGGAAFNNEFGRPNLLGYFRTYEEQVTSHNGLEVRGYHKPIMLAGGLGNIRTDHVQKGEIPVGAKLIALGGPAMNIGLGGGAASSMASGQSNEDLDFASVQRENPEMERRCQEVIDKCWQLGDENPIAFIHDVGAGGLSNAFPELVNDGGRGGKFQLRDIPNDEPGMAPHEIWCNESQERYVLAVGVEDFDRFEAICKRERAQYAVIGEATAEPHLTVADSHFDNNPVDLPLDVLLGKAPKMHRDVTSKQVVGKALDVTNINVADAAQRLLRLPTIAEKTFLITIGDRSVTGLVARDQMVGPWQVPVANCAVTAATYDTYHGEAMSLGERTPAALLNYAASARLAVAESLTNIACANIGSLENIKLSANWMAAAGHPGEDAGLYEAVKAIGEELCPALGLTIPVGKDSMSMKTTWKDEGDSQEKSVTSPLSLIITAFGRVDDVRKTVTPQLRTDKGETSLILVDLGAGKNRMGASSLAQVYKQLGDITPDVDSPELLKGFYNAMQVLVADSKLLAYHDRSDGGLFTTVAEMAFAGHTGVTVDINGLTGNDIEALYNEELGAVIQVANSDLDAVNAVLKDHGLATISHIIGTLNSDDAIVFNRGKNTVLSNTRTELRTMWAETTYQMQARRDNPECAKQEFDAKFDVKDPGLNVKLNFDLNEDIAAPYIATGAKPPMAILREQGVNSHLEMAAAFNRAGFAAIDVHMSDILEGRLSLEQFKGLVACGGFSYGDVLGAGEGWAKSILFNDMAREQFQSFFHREDTFSLGVCNGCQMLSTLKELIPGTEHWPRFVTNKSERFEARFSLVEIQENPSVFFNGMAGSRMPIAVSHGEGHAEFANDNAVKAALDSGTVAVKFVDNYGNPTTQYPANPNGSPEGITGITSTDGRATVMMPHPERVFRAVANSWHPDEWREDSPWMRMFRNARKNVG.

The interval 300–325 (APFSGAATGSGGEIRDEGATGRGSKP) is disordered. ATP-binding positions include 304–315 (GAATGSGGEIRD) and alanine 675. Residues glutamate 715, asparagine 719, and aspartate 885 each coordinate Mg(2+). Serine 887 lines the ATP pocket. The Glutamine amidotransferase type-1 domain maps to 1043–1296 (MAILREQGVN…MFRNARKNVG (254 aa)). Residue cysteine 1136 is the Nucleophile of the active site. The interval 1232-1253 (TQYPANPNGSPEGITGITSTDG) is disordered. Active-site residues include histidine 1261 and glutamate 1263.

In the N-terminal section; belongs to the FGAMS family. In terms of assembly, monomer.

It is found in the cytoplasm. It carries out the reaction N(2)-formyl-N(1)-(5-phospho-beta-D-ribosyl)glycinamide + L-glutamine + ATP + H2O = 2-formamido-N(1)-(5-O-phospho-beta-D-ribosyl)acetamidine + L-glutamate + ADP + phosphate + H(+). It participates in purine metabolism; IMP biosynthesis via de novo pathway; 5-amino-1-(5-phospho-D-ribosyl)imidazole from N(2)-formyl-N(1)-(5-phospho-D-ribosyl)glycinamide: step 1/2. In terms of biological role, phosphoribosylformylglycinamidine synthase involved in the purines biosynthetic pathway. Catalyzes the ATP-dependent conversion of formylglycinamide ribonucleotide (FGAR) and glutamine to yield formylglycinamidine ribonucleotide (FGAM) and glutamate. The protein is Phosphoribosylformylglycinamidine synthase of Pseudoalteromonas translucida (strain TAC 125).